The primary structure comprises 314 residues: Protein EXORDIUM (314 aa).

Residues M1 to A21 form the signal peptide.

Belongs to the EXORDIUM family. As to expression, expressed in root tips, vascular tissue of roots, shoot apex, rosette leaves and embryos.

Its subcellular location is the secreted. It localises to the extracellular space. The protein localises to the apoplast. In terms of biological role, required for cell expansion in leaves. May mediate brassinosteroid (BR)-induced leaf growth. May play a role in the control of BR responses in roots. May be involved in signaling processes that coordinate BR responses with environmental or developmental signals. This Arabidopsis thaliana (Mouse-ear cress) protein is Protein EXORDIUM (EXO).